A 120-amino-acid polypeptide reads, in one-letter code: Protein sigma-1-small (120 aa).

It belongs to the orthoreovirus sigma-1s protein family.

The sequence is that of Protein sigma-1-small (S1) from Mammalia (T3D).